Consider the following 233-residue polypeptide: Purine nucleoside phosphorylase DeoD-type (233 aa).

A purine D-ribonucleoside is bound at residue H4. Residues G20, R24, R43, and 87 to 90 (RIGT) contribute to the phosphate site. Residues 179–181 (EME) and 203–204 (SD) contribute to the a purine D-ribonucleoside site. D204 acts as the Proton donor in catalysis.

Belongs to the PNP/UDP phosphorylase family. In terms of assembly, homohexamer; trimer of homodimers.

The catalysed reaction is a purine D-ribonucleoside + phosphate = a purine nucleobase + alpha-D-ribose 1-phosphate. It carries out the reaction a purine 2'-deoxy-D-ribonucleoside + phosphate = a purine nucleobase + 2-deoxy-alpha-D-ribose 1-phosphate. Its function is as follows. Catalyzes the reversible phosphorolytic breakdown of the N-glycosidic bond in the beta-(deoxy)ribonucleoside molecules, with the formation of the corresponding free purine bases and pentose-1-phosphate. The sequence is that of Purine nucleoside phosphorylase DeoD-type from Helicobacter pylori (strain G27).